A 221-amino-acid chain; its full sequence is Carbonic anhydrase (221 aa).

Residues C57, D59, H112, and C115 each coordinate Zn(2+).

Belongs to the beta-class carbonic anhydrase family. Requires Zn(2+) as cofactor.

The protein resides in the cytoplasm. The protein localises to the nucleus. It localises to the mitochondrion intermembrane space. It catalyses the reaction hydrogencarbonate + H(+) = CO2 + H2O. Its function is as follows. Catalyzes the reversible hydration of CO(2) to H(2)CO(3). The main role may be to provide inorganic carbon for the bicarbonate-dependent carboxylation reactions catalyzed by pyruvate carboxylase, acetyl-CoA carboxylase and carbamoyl-phosphate synthetase. Involved in protection against oxidative damage. Encodes a substrate for the non-classical protein export pathway for proteins that lack a cleavable signal sequence. The sequence is that of Carbonic anhydrase (NCE103) from Saccharomyces cerevisiae (strain ATCC 204508 / S288c) (Baker's yeast).